We begin with the raw amino-acid sequence, 261 residues long: Precorrin-6A reductase (261 aa).

The protein belongs to the precorrin-6x reductase family.

The enzyme catalyses precorrin-6B + NADP(+) = precorrin-6A + NADPH + 2 H(+). It participates in cofactor biosynthesis; adenosylcobalamin biosynthesis; cob(II)yrinate a,c-diamide from precorrin-2 (aerobic route): step 6/10. In terms of biological role, catalyzes the reduction of the macrocycle of precorrin-6X into precorrin-6Y. The chain is Precorrin-6A reductase (cobK) from Sinorhizobium sp.